Consider the following 319-residue polypeptide: Ferrochelatase (319 aa).

Fe cation-binding residues include His192 and Glu271.

The protein belongs to the ferrochelatase family.

It localises to the cytoplasm. It carries out the reaction heme b + 2 H(+) = protoporphyrin IX + Fe(2+). The protein operates within porphyrin-containing compound metabolism; protoheme biosynthesis; protoheme from protoporphyrin-IX: step 1/1. Catalyzes the ferrous insertion into protoporphyrin IX. In Geotalea uraniireducens (strain Rf4) (Geobacter uraniireducens), this protein is Ferrochelatase.